A 347-amino-acid polypeptide reads, in one-letter code: MIKLSKKYCLGISFVLYILLSVCEGHKNLTCDFNDVYKLEFHPNQQTSVTKLCNLTPNVLEKVTIKCGSDKLNYNLYPPTCFEEVYASRNMMHLKKIKEFVIGSSMFMRRSLTPNKINEVSFRIPPNMMPEKPIYCFCENKKTITINGSNGNPSSKKDIINRGIVEIIIPSLNEKVKGCDFTTSESTIFSKGYSINEISNKSSNNQQDIVCTVKAHANDLIGFKCPSNYSVEPHDCFVSAFNLSGKNENLENKLKLTNIIMDHYNNTFYSRLPSLISDNWKFFCVCSKDNEKKLVFTVEASISSSNTKLASRDNTYQDYISNSSFLTLSSYCAFITFIITSFLSFIL.

The first 25 residues, 1–25 (MIKLSKKYCLGISFVLYILLSVCEG), serve as a signal peptide directing secretion. 6-Cys domains lie at 27-172 (KNLT…IPSL) and 175-305 (KVKG…ISSS). A glycan (N-linked (GlcNAc...) asparagine) is linked at asparagine 28. 3 disulfides stabilise this stretch: cysteine 31-cysteine 53, cysteine 67-cysteine 138, and cysteine 81-cysteine 136. Asparagine 147, asparagine 200, asparagine 228, asparagine 242, asparagine 265, and asparagine 322 each carry an N-linked (GlcNAc...) asparagine glycan. Disulfide bonds link cysteine 179–cysteine 211, cysteine 225–cysteine 286, and cysteine 236–cysteine 284. Asparagine 322 carries GPI-anchor amidated asparagine lipidation. Positions 323-347 (SSFLTLSSYCAFITFIITSFLSFIL) are cleaved as a propeptide — removed in mature form.

As to quaternary structure, heterodimer; heterodimerizes with PF41. May form an antiparallel heterodimer with PF41. In terms of processing, processed into a soluble form.

It localises to the cell surface. It is found in the cell membrane. The chain is Merozoite surface protein P12 (PF12) from Plasmodium falciparum (isolate 3D7).